A 1113-amino-acid polypeptide reads, in one-letter code: Histone deacetylase 5 (1113 aa).

Residues 1 to 22 (MNSPNESDGMSGREPSLGILPR) form a disordered region. Lys-35 is covalently cross-linked (Glycyl lysine isopeptide (Lys-Gly) (interchain with G-Cter in SUMO2)). Disordered regions lie at residues 39 to 63 (PGAMPSSMGGGGGGSPSPVELRGAL) and 187 to 272 (KEPT…SSPL). Residues 238–249 (DSRDDFPLRKTA) are compositionally biased toward basic and acidic residues. Position 250 is a phosphoserine; by AMPK, CaMK1, SIK1 and PKD/PRKD1 (Ser-250). Residues 263–272 (KVAERRSSPL) are compositionally biased toward basic and acidic residues. Thr-283 carries the post-translational modification Phosphothreonine; by PKC. The tract at residues 472-494 (RTVGKLPRHRPLSRTQSSPLPQS) is disordered. Low complexity predominate over residues 484–494 (SRTQSSPLPQS). Position 488 is a phosphoserine; by AMPK, CaMK1, SIK1 and PKD/PRKD1 (Ser-488). Lys-523 is subject to N6-acetyllysine. Residues 526 to 611 (TKTGELSRQP…PDEGPDLEES (86 aa)) form a disordered region. Residues 571–610 (STQEDLEEEEEEEEEEEEDCIQVKDEDGESGPDEGPDLEE) are compositionally biased toward acidic residues. Phosphoserine occurs at positions 600 and 650. Residues 675–1019 (GVVYDTFMLK…VSALLSVELQ (345 aa)) form a histone deacetylase region. Zn(2+) contacts are provided by Cys-687, Cys-689, His-695, and Cys-772. His-824 is an active-site residue. The Nuclear export signal motif lies at 1072–1113 (EEAETVSAMALLSVGAEQAQAVATQEHSPRPAEEPMEQEPAL). Residues 1088-1113 (EQAQAVATQEHSPRPAEEPMEQEPAL) are disordered. Ser-1099 carries the post-translational modification Phosphoserine.

This sequence belongs to the histone deacetylase family. HD type 2 subfamily. In terms of assembly, interacts with AHRR, BAHD1, BCOR, HDAC7, HDAC9, CTBP1, MEF2C, NCOR2, NRIP1, PHB2 and a 14-3-3 chaperone protein. Interacts with BCL6, DDIT3/CHOP, GRK5, KDM5B and MYOCD. Interacts with EP300 in the presence of TFAP2C. Interacts with ANKRA2. Interacts with CUL7 (as part of the 3M complex); negatively regulated by ANKRA2. Interacts with ZBTB7B; the interaction allows the recruitment of HDAC4 on CD8 loci for deacetylation and possible inhibition of CD8 genes expression. Interacts with RARA. In terms of processing, phosphorylated by AMPK, CaMK1, SIK1 and PRKD1 at Ser-250 and Ser-488. The phosphorylation is required for the export to the cytoplasm and inhibition. Phosphorylated by the PKC kinases PKN1 and PKN2, impairing nuclear import. Phosphorylated by GRK5, leading to nuclear export of HDAC5 and allowing MEF2-mediated transcription. Ubiquitinated. Polyubiquitination however does not lead to its degradation.

It is found in the nucleus. The protein resides in the cytoplasm. It carries out the reaction N(6)-acetyl-L-lysyl-[histone] + H2O = L-lysyl-[histone] + acetate. Functionally, responsible for the deacetylation of lysine residues on the N-terminal part of the core histones (H2A, H2B, H3 and H4). Histone deacetylation gives a tag for epigenetic repression and plays an important role in transcriptional regulation, cell cycle progression and developmental events. Histone deacetylases act via the formation of large multiprotein complexes. Involved in muscle maturation by repressing transcription of myocyte enhancer MEF2C. During muscle differentiation, it shuttles into the cytoplasm, allowing the expression of myocyte enhancer factors. Serves as a corepressor of RARA and causes its deacetylation. In association with RARA, plays a role in the repression of microRNA-10a and thereby in the inflammatory response. The polypeptide is Histone deacetylase 5 (Hdac5) (Mus musculus (Mouse)).